Consider the following 387-residue polypeptide: 3-ketoacyl-CoA thiolase (387 aa).

The active-site Acyl-thioester intermediate is the Cys91. Catalysis depends on proton acceptor residues His343 and Cys373.

Belongs to the thiolase-like superfamily. Thiolase family. Heterotetramer of two alpha chains (FadB) and two beta chains (FadA).

The protein localises to the cytoplasm. The catalysed reaction is an acyl-CoA + acetyl-CoA = a 3-oxoacyl-CoA + CoA. It participates in lipid metabolism; fatty acid beta-oxidation. In terms of biological role, catalyzes the final step of fatty acid oxidation in which acetyl-CoA is released and the CoA ester of a fatty acid two carbons shorter is formed. The sequence is that of 3-ketoacyl-CoA thiolase from Shewanella denitrificans (strain OS217 / ATCC BAA-1090 / DSM 15013).